The chain runs to 231 residues: ABC transporter ATP-binding protein YtrE (231 aa).

Residues 4-231 enclose the ABC transporter domain; it reads VQHIDHSFTI…VLKGGITVEV (228 aa). Residue 42–49 coordinates ATP; that stretch reads GRSGSGKS.

Belongs to the ABC transporter superfamily. As to quaternary structure, the complex is composed of 2 ATP-binding proteins (YtrB and YtrE), 2 transmembrane proteins (YtrC and YtrD) and a solute-binding protein (YtrF).

It is found in the cell membrane. Functionally, part of the ABC transporter complex YtrBCDEF that plays a role in acetoin utilization during stationary phase and sporulation. The chain is ABC transporter ATP-binding protein YtrE (ytrE) from Bacillus subtilis (strain 168).